Reading from the N-terminus, the 82-residue chain is MVTIRLQRGGAKKRPFYQVVVSDSRCARDGRFIERVGFFNPVASGSAETLNLDLARIEHWVATGAAVSDRVAKLIKDATKAA.

This sequence belongs to the bacterial ribosomal protein bS16 family.

The sequence is that of Small ribosomal subunit protein bS16 from Aeromonas salmonicida (strain A449).